Here is a 744-residue protein sequence, read N- to C-terminus: Tripartite motif-containing protein 2 (744 aa).

Residue Ser-10 is modified to Phosphoserine. The RING-type zinc-finger motif lies at 23–64; the sequence is CSICLERYKNPKVLPCLHTFCERCLQNYIPAHSLTLSCPVCR. Residues 113–154 form a B box-type zinc finger; the sequence is GKPLSCPNHDGNVMDFYCQSCETAMCRECTEGEHAEHPTVPL. Zn(2+)-binding residues include Cys-118, His-121, Cys-141, and His-146. The Filamin repeat unit spans residues 320 to 421; sequence TTNAVASETV…IRGSPFKLKV (102 aa). The residue at position 371 (Thr-371) is a Phosphothreonine. 3 positions are modified to phosphoserine: Ser-375, Ser-424, and Ser-428. The interval 432 to 462 is disordered; the sequence is EGVKRRVKSPGSGHVKQKAVKRPASMYSTGK. NHL repeat units follow at residues 473-516, 520-563, 564-605, 609-652, 656-699, and 700-743; these read IFRV…FSND, KSRF…FSSD, GKFK…FQPN, VTRF…FNQE, MLKF…FDGS, and GSFL…YRYL.

It belongs to the TRIM/RBCC family. Forms homooligomers. Interacts with TRIM3; this interaction reduces TRIM2 activity. Interacts with myosin V; myosin V may not be a substrate for ubiquitination. Interacts with NEFL. Interacts with phosphorylated BCL2L11. Interacts with SIRPA. RING-type zinc finger-dependent and UBE2D1-dependent autoubiquitination.

The protein localises to the cytoplasm. It catalyses the reaction S-ubiquitinyl-[E2 ubiquitin-conjugating enzyme]-L-cysteine + [acceptor protein]-L-lysine = [E2 ubiquitin-conjugating enzyme]-L-cysteine + N(6)-ubiquitinyl-[acceptor protein]-L-lysine.. It functions in the pathway protein modification; protein ubiquitination. In terms of biological role, UBE2D1-dependent E3 ubiquitin-protein ligase that mediates the ubiquitination of NEFL and of phosphorylated BCL2L11. Plays a neuroprotective function. May play a role in neuronal rapid ischemic tolerance. Plays a role in antiviral immunity and limits New World arenavirus infection independently of its ubiquitin ligase activity. This is Tripartite motif-containing protein 2 (TRIM2) from Ailuropoda melanoleuca (Giant panda).